The primary structure comprises 443 residues: ATP-dependent protease ATPase subunit HslU (443 aa).

Residues isoleucine 18, 60–65 (GVGKTE), aspartate 256, glutamate 321, and arginine 393 each bind ATP.

The protein belongs to the ClpX chaperone family. HslU subfamily. As to quaternary structure, a double ring-shaped homohexamer of HslV is capped on each side by a ring-shaped HslU homohexamer. The assembly of the HslU/HslV complex is dependent on binding of ATP.

The protein localises to the cytoplasm. ATPase subunit of a proteasome-like degradation complex; this subunit has chaperone activity. The binding of ATP and its subsequent hydrolysis by HslU are essential for unfolding of protein substrates subsequently hydrolyzed by HslV. HslU recognizes the N-terminal part of its protein substrates and unfolds these before they are guided to HslV for hydrolysis. This chain is ATP-dependent protease ATPase subunit HslU, found in Escherichia coli O139:H28 (strain E24377A / ETEC).